The primary structure comprises 271 residues: Putative F-box protein L165 (271 aa).

The 46-residue stretch at 4-49 (ICELFDDVILEIMNLLSDTDKINFMFCCSRFYYFIDLVYYNDIYDY) folds into the F-box domain. The disordered stretch occupies residues 251 to 271 (NIPKIVPKNTHYRNSSKKYRY). Basic residues predominate over residues 260–271 (THYRNSSKKYRY).

In Acanthamoeba polyphaga mimivirus (APMV), this protein is Putative F-box protein L165.